A 143-amino-acid chain; its full sequence is Crossover junction endodeoxyribonuclease Hjc (143 aa).

Glu12 contributes to the Mg(2+) binding site. Ser32 is a catalytic residue. The Mg(2+) site is built by Asp42 and Glu55.

Belongs to the Holliday junction resolvase Hjc family. In terms of assembly, homodimer. Interacts with PCNA subunit PCNA1. Mg(2+) is required as a cofactor.

The catalysed reaction is Endonucleolytic cleavage at a junction such as a reciprocal single-stranded crossover between two homologous DNA duplexes (Holliday junction).. With respect to regulation, autoinhibits at very high concentrations, possibly because of extreme junction distortion. Inhibition (and activity at low concentrations of enzyme) is stimulated by dsDNA and Sso7d. Activity stimulated by PCNA subunit PCNA1. In terms of biological role, a structure-specific endonuclease that resolves Holliday junction (HJ) intermediates during genetic recombination; may have some degree of sequence preference in a mobile junction. Cleaves 4-way DNA junctions introducing paired nicks in opposing strands, leaving a 5'-terminal phosphate and a 3'-terminal hydroxyl group that are subsequently ligated to produce recombinant products. Can cleave all 4 strands 3 bases 3' of the junction center. Cleaves both mobile and immobile junctions. Modifies the structure of the 4-way DNA junction, a model Holliday junction structure. The protein forms multiple complexes with 4-way DNA, suggesting more than 1 homodimer can bind to each junction. In Saccharolobus solfataricus (strain ATCC 35092 / DSM 1617 / JCM 11322 / P2) (Sulfolobus solfataricus), this protein is Crossover junction endodeoxyribonuclease Hjc.